The chain runs to 776 residues: Lysyl oxidase homolog 2 (776 aa).

An N-terminal signal peptide occupies residues 1–25 (MELHFGSCLSGCLALLVLLPSLSLA). SRCR domains follow at residues 61 to 162 (VRLA…VVCS), 191 to 305 (IRPI…VSCV), 329 to 428 (VRLR…VRCN), and 438 to 546 (VRLN…VACS). 9 disulfide bridges follow: Cys-87/Cys-151, Cys-100/Cys-161, Cys-131/Cys-141, Cys-221/Cys-294, Cys-234/Cys-304, Cys-268/Cys-278, Cys-354/Cys-417, Cys-367/Cys-427, and Cys-398/Cys-408. A glycan (N-linked (GlcNAc...) asparagine) is linked at Asn-267. An N-linked (GlcNAc...) asparagine glycan is attached at Asn-291. Asn-458 carries N-linked (GlcNAc...) asparagine glycosylation. 3 disulfides stabilise this stretch: Cys-467–Cys-532, Cys-480–Cys-545, and Cys-514–Cys-524. The tract at residues 550–753 (PDLVLNAEIV…WMYNCHVGGA (204 aa)) is lysyl-oxidase like. Ca(2+) contacts are provided by Asp-551 and Leu-552. Intrachain disulfides connect Cys-575–Cys-627, Cys-581–Cys-697, Cys-659–Cys-675, and Cys-665–Cys-687. His-628, His-630, and His-632 together coordinate Cu cation. Asn-646 carries N-linked (GlcNAc...) asparagine glycosylation. The segment at residues 655 to 691 (KASFCLEDTECEGDIQKSYECANFGEQGITMGCWDMY) is a cross-link (lysine tyrosylquinone (Lys-Tyr)). Tyr-691 is modified (2',4',5'-topaquinone). Glu-724, Asp-726, Asn-729, and Asn-730 together coordinate Ca(2+). The cysteines at positions 734 and 748 are disulfide-linked.

It belongs to the lysyl oxidase family. Component of some chromatin repressor complex. Interacts with SNAI1. Interacts with TAF10. Interacts with HSPA5. Interacts with EFEMP2. Requires Cu cation as cofactor. Lysine tyrosylquinone residue serves as cofactor. In terms of processing, the lysine tyrosylquinone cross-link (LTQ) is generated by condensation of the epsilon-amino group of a lysine with a topaquinone produced by oxidation of tyrosine. N-glycosylated. N-glycosylation on Asn-458 and Asn-646 may be essential for proper folding and secretion; may be composed of a fucosylated carbohydrates attached to a trimannose N-linked glycan core. In terms of tissue distribution, ubiquitous. Highest expression in skin, lung and thymus. Present in chondrocytes: mainly expressed by chondrocytes in healing fractures and in epiphyseal growth plates (at protein level).

Its subcellular location is the secreted. The protein resides in the extracellular space. The protein localises to the extracellular matrix. It is found in the basement membrane. It localises to the nucleus. Its subcellular location is the chromosome. The protein resides in the endoplasmic reticulum. The enzyme catalyses L-lysyl-[protein] + O2 + H2O = (S)-2-amino-6-oxohexanoyl-[protein] + H2O2 + NH4(+). Its activity is regulated as follows. Specifically inhibited by a mouse monoclonal antibody AB0023, inhibition occurs in a non-competitive manner. Functionally, mediates the post-translational oxidative deamination of lysine residues on target proteins leading to the formation of deaminated lysine (allysine). Acts as a transcription corepressor and specifically mediates deamination of trimethylated 'Lys-4' of histone H3 (H3K4me3), a specific tag for epigenetic transcriptional activation. Shows no activity against histone H3 when it is trimethylated on 'Lys-9' (H3K9me3) or 'Lys-27' (H3K27me3) or when 'Lys-4' is monomethylated (H3K4me1) or dimethylated (H3K4me2). Also mediates deamination of methylated TAF10, a member of the transcription factor IID (TFIID) complex, which induces release of TAF10 from promoters, leading to inhibition of TFIID-dependent transcription. LOXL2-mediated deamination of TAF10 results in transcriptional repression of genes required for embryonic stem cell pluripotency including POU5F1/OCT4, NANOG, KLF4 and SOX2. Involved in epithelial to mesenchymal transition (EMT) via interaction with SNAI1 and participates in repression of E-cadherin, probably by mediating deamination of histone H3. During EMT, involved with SNAI1 in negatively regulating pericentromeric heterochromatin transcription. SNAI1 recruits LOXL2 to pericentromeric regions to oxidize histone H3 and repress transcription which leads to release of heterochromatin component CBX5/HP1A, enabling chromatin reorganization and acquisition of mesenchymal traits. Interacts with the endoplasmic reticulum protein HSPA5 which activates the IRE1-XBP1 pathway of the unfolded protein response, leading to expression of several transcription factors involved in EMT and subsequent EMT induction. When secreted into the extracellular matrix, promotes cross-linking of extracellular matrix proteins by mediating oxidative deamination of peptidyl lysine residues in precursors to fibrous collagen and elastin. Acts as a regulator of sprouting angiogenesis, probably via collagen IV scaffolding. Acts as a regulator of chondrocyte differentiation, probably by regulating expression of factors that control chondrocyte differentiation. The chain is Lysyl oxidase homolog 2 (Loxl2) from Mus musculus (Mouse).